The chain runs to 436 residues: Protein arginine methyltransferase NDUFAF7, mitochondrial (436 aa).

The N-terminal 41 residues, 1–41 (MNALVRRCVARAGLPCIWRGKCYSSGNEPAESNQVTPMLRH), are a transit peptide targeting the mitochondrion. The interval 411–436 (GSQERNACQSKTPSSSVAGFDELVWQ) is disordered. Positions 413-427 (QERNACQSKTPSSSV) are enriched in polar residues.

The protein belongs to the NDUFAF7 family. In terms of assembly, interacts with NDUFS2.

The protein localises to the mitochondrion. The catalysed reaction is L-arginyl-[protein] + 2 S-adenosyl-L-methionine = N(omega),N(omega)'-dimethyl-L-arginyl-[protein] + 2 S-adenosyl-L-homocysteine + 2 H(+). Its function is as follows. Arginine methyltransferase involved in the assembly or stability of mitochondrial NADH:ubiquinone oxidoreductase complex (complex I). Acts by mediating symmetric dimethylation of 'Arg-118' of NDUFS2 after it assembles into the complex I, stabilizing the early intermediate complex. This chain is Protein arginine methyltransferase NDUFAF7, mitochondrial, found in Mus musculus (Mouse).